We begin with the raw amino-acid sequence, 238 residues long: Purine nucleoside phosphorylase DeoD-type (238 aa).

Residue His-4 coordinates a purine D-ribonucleoside. Phosphate is bound by residues Gly-20, Arg-24, Arg-43, and 87 to 90 (RVGS). Residues 179-181 (EME) and 203-204 (SD) each bind a purine D-ribonucleoside. Asp-204 serves as the catalytic Proton donor.

Belongs to the PNP/UDP phosphorylase family. As to quaternary structure, homohexamer; trimer of homodimers.

The catalysed reaction is a purine D-ribonucleoside + phosphate = a purine nucleobase + alpha-D-ribose 1-phosphate. The enzyme catalyses a purine 2'-deoxy-D-ribonucleoside + phosphate = a purine nucleobase + 2-deoxy-alpha-D-ribose 1-phosphate. Catalyzes the reversible phosphorolytic breakdown of the N-glycosidic bond in the beta-(deoxy)ribonucleoside molecules, with the formation of the corresponding free purine bases and pentose-1-phosphate. This Haemophilus influenzae (strain PittEE) protein is Purine nucleoside phosphorylase DeoD-type.